The following is a 108-amino-acid chain: Holo-[acyl-carrier-protein] synthase (108 aa).

D9 and E54 together coordinate Mg(2+).

This sequence belongs to the P-Pant transferase superfamily. AcpS family. Mg(2+) serves as cofactor.

Its subcellular location is the cytoplasm. It carries out the reaction apo-[ACP] + CoA = holo-[ACP] + adenosine 3',5'-bisphosphate + H(+). In terms of biological role, transfers the 4'-phosphopantetheine moiety from coenzyme A to a Ser of acyl-carrier-protein. This is Holo-[acyl-carrier-protein] synthase from Mycoplasmopsis pulmonis (strain UAB CTIP) (Mycoplasma pulmonis).